Reading from the N-terminus, the 391-residue chain is PPE family protein PPE18 (391 aa).

It belongs to the mycobacterial PPE family. In terms of assembly, interacts with human TLR2.

The protein resides in the secreted. It is found in the cell wall. The protein localises to the cell surface. Could be a crucial virulence factor for intracellular survival of M.tuberculosis. Favors development of Th2-type response, and down-regulates the pro-inflammatory and Th1-type response. Specifically interacts with the human Toll-like receptor 2 (TLR2), leading to an early and sustained activation of p38 MAPK, which induces IL-10 production and activates Th2-type immune response. Also inhibits pro-inflammatory cytokines IL-12p40 and TNF-alpha production. Acts by up-regulating the expression as well as tyrosine phosphorylation of suppressor of cytokine signaling 3 (SOCS-3), leading to the inhibition of phosphorylation of I-kappa-B-alpha, thereby preventing nuclear translocation of the NF-kappa-B/REL subunits and expression of NF-kappa-B regulated genes like IL-12 and TNF-alpha. Induction of SOCS-3 probably depends on the activation of p38 MAPK. The sequence is that of PPE family protein PPE18 from Mycobacterium tuberculosis (strain ATCC 25618 / H37Rv).